A 62-amino-acid chain; its full sequence is Alpha-conotoxin-like Qc1.2 (62 aa).

The N-terminal stretch at 1 to 21 (MGMRMMFTVFLLVALATTVAS) is a signal peptide. Residues 22–48 (FTLDRASNGRNAAADDKPSDWIALAIK) constitute a propeptide that is removed on maturation. Pyrrolidone carboxylic acid is present on Gln-49. Cystine bridges form between Cys-50/Cys-56 and Cys-51/Cys-61.

The protein belongs to the conotoxin A superfamily. Expressed by the venom duct.

The protein resides in the secreted. Alpha-conotoxins bind to the nicotinic acetylcholine receptors (nAChR) and inhibit them. This synthetic peptide (10 uM) selectively, but weakly inhibits both rat neuronal alpha-3-beta-2/CHRNA3-CHRNB2 (63%) and alpha-3-beta-4/CHRNA3-CHRNB4 (37%) subtypes of nAChR. This Conus quercinus (Oak cone) protein is Alpha-conotoxin-like Qc1.2.